The primary structure comprises 348 residues: Rhodopsin (348 aa).

The residue at position 1 (methionine 1) is an N-acetylmethionine. Over 1–36 (MNGTEGPNFYVPFSNKTGVVRSPFEAPQYYLAEPWQ) the chain is Extracellular. 2 N-linked (GlcNAc...) asparagine glycosylation sites follow: asparagine 2 and asparagine 15. A helical transmembrane segment spans residues 37–61 (FSMLAAYMFLLIVLGFPINFLTLYV). Over 62-73 (TVQHKKLRTPLN) the chain is Cytoplasmic. A helical membrane pass occupies residues 74 to 96 (YILLNLAVADLFMVFGGFTTTLY). Topologically, residues 97-110 (TSLHGYFVFGPTGC) are extracellular. An intrachain disulfide couples cysteine 110 to cysteine 187. A helical transmembrane segment spans residues 111-133 (NLEGFFATLGGEIALWSLVVLAI). Residues 134–136 (ERY) carry the 'Ionic lock' involved in activated form stabilization motif. The Cytoplasmic portion of the chain corresponds to 134–152 (ERYVVVCKPMSNFRFGENH). A helical membrane pass occupies residues 153 to 173 (AIMGVAFTWVMALACAAPPLV). At 174–202 (GWSRYIPQGMQCSCGALYFTLKPEINNES) the chain is on the extracellular side. Zn(2+) is bound at residue glutamate 201. Residues 203 to 224 (FVIYMFVVHFSIPLIVIFFCYG) form a helical membrane-spanning segment. At 225–252 (QLVFTVKEAAAQQQESATTQKAEKEVTR) the chain is on the cytoplasmic side. Residues 253–274 (MVIIMVIAFLICWLPYAGVAFY) form a helical membrane-spanning segment. Residues 275 to 286 (IFTHQGSDFGPI) lie on the Extracellular side of the membrane. A Zn(2+)-binding site is contributed by glutamine 279. The chain crosses the membrane as a helical span at residues 287–308 (FMTIPAFFAKSSSVYNPVIYIM). Residue lysine 296 is modified to N6-(retinylidene)lysine. Residues 309–348 (MNKQFRNCMLTTLCCGKNPLGDDEASTTVSKTETSQVAPA) are Cytoplasmic-facing. Residues cysteine 322 and cysteine 323 are each lipidated (S-palmitoyl cysteine). An interaction with SAG region spans residues 330–348 (DDEASTTVSKTETSQVAPA). Serine 334 is subject to Phosphoserine. Serine 334 is subject to Phosphoserine; by RK and GRK7. Phosphothreonine occurs at positions 335 and 336. A phosphothreonine; by RK and GRK7 mark is found at threonine 335 and threonine 336. Serine 338 bears the Phosphoserine; by RK and GRK7 mark. Phosphothreonine is present on residues threonine 340 and threonine 342. At serine 343 the chain carries Phosphoserine; by RK and GRK7.

This sequence belongs to the G-protein coupled receptor 1 family. Opsin subfamily. As to quaternary structure, homodimer. May form a complex composed of RHO, GRK1 and RCVRN in a Ca(2+)-dependent manner; RCVRN prevents the interaction between GRK1 and RHO. Interacts with GRK1. Interacts (phosphorylated form) with SAG. Interacts with GNAT1. Interacts with GNAT3. SAG and G-proteins compete for a common binding site. Interacts with PRCD; the interaction promotes PRCD stability. Forms a complex with ASAP1 and ARF4. Forms a complex with ASAP1, RAB11A, Rabin8/RAB3IP, ARF4 and RAB11FIP3; the complex regulates Golgi-to-cilia rhodopsin/RHO transport in photoreceptors. Post-translationally, phosphorylated on some or all of the serine and threonine residues present in the C-terminal region. In terms of processing, contains one covalently linked retinal chromophore. Upon light absorption, the covalently bound 11-cis-retinal is converted to all-trans-retinal. After hydrolysis of the Schiff base and release of the covalently bound all-trans-retinal, active rhodopsin is regenerated by binding of a fresh molecule of 11-cis-retinal.

Its subcellular location is the membrane. It is found in the cell projection. It localises to the cilium. The protein localises to the photoreceptor outer segment. In terms of biological role, photoreceptor required for image-forming vision at low light intensity. Required for photoreceptor cell viability after birth. Light-induced isomerization of 11-cis to all-trans retinal triggers a conformational change that activates signaling via G-proteins. Subsequent receptor phosphorylation mediates displacement of the bound G-protein alpha subunit by the arrestin SAG and terminates signaling. The sequence is that of Rhodopsin (RHO) from Ovis aries (Sheep).